A 397-amino-acid chain; its full sequence is Alpha-lytic protease (397 aa).

A signal peptide spans 1 to 24 (MYVSNHRSRRVARVSVSCLVAALA). The propeptide occupies 25–199 (AMSCGAALAA…ESSPGKLQTT (175 aa)). An intrachain disulfide couples cysteine 216 to cysteine 236. Active-site charge relay system residues include histidine 235 and aspartate 262. 2 disulfides stabilise this stretch: cysteine 300/cysteine 310 and cysteine 336/cysteine 369. Serine 342 acts as the Charge relay system in catalysis.

This sequence belongs to the peptidase S1 family.

The enzyme catalyses Preferential cleavage: Ala-|-Xaa, Val-|-Xaa in bacterial cell walls, elastin and other proteins.. The sequence is that of Alpha-lytic protease (alpha-LP) from Lysobacter enzymogenes.